Reading from the N-terminus, the 160-residue chain is CXXC motif containing zinc binding protein (160 aa).

Zn(2+)-binding residues include cysteine 33, cysteine 36, cysteine 67, and cysteine 70. Residue serine 75 is modified to Phosphoserine.

The protein belongs to the UPF0587 family. As to quaternary structure, monomer.

In Mus musculus (Mouse), this protein is CXXC motif containing zinc binding protein (Czib).